Consider the following 159-residue polypeptide: uncharacterized protein (159 aa).

2 consecutive transmembrane segments (helical) span residues 59–79 (IGALAAMLAVLSFALGCALVY) and 91–113 (VFSVLSGLLYGGGAVLWGLRRVC).

Its subcellular location is the cell membrane. This is an uncharacterized protein from Treponema pallidum (strain Nichols).